Consider the following 387-residue polypeptide: Mannitol-1-phosphate 5-dehydrogenase (387 aa).

An NAD(+)-binding site is contributed by 3-14; it reads ALHFGAGNIGRG.

This sequence belongs to the mannitol dehydrogenase family.

The enzyme catalyses D-mannitol 1-phosphate + NAD(+) = beta-D-fructose 6-phosphate + NADH + H(+). The sequence is that of Mannitol-1-phosphate 5-dehydrogenase from Yersinia pseudotuberculosis serotype O:1b (strain IP 31758).